A 135-amino-acid polypeptide reads, in one-letter code: Large ribosomal subunit protein bL17 (135 aa).

It belongs to the bacterial ribosomal protein bL17 family. In terms of assembly, part of the 50S ribosomal subunit. Contacts protein L32.

The protein is Large ribosomal subunit protein bL17 of Listeria welshimeri serovar 6b (strain ATCC 35897 / DSM 20650 / CCUG 15529 / CIP 8149 / NCTC 11857 / SLCC 5334 / V8).